Reading from the N-terminus, the 203-residue chain is Thymidylate kinase (203 aa).

ATP is bound at residue 10-17 (GIDGCGKT).

This sequence belongs to the thymidylate kinase family.

The catalysed reaction is dTMP + ATP = dTDP + ADP. Functionally, phosphorylation of dTMP to form dTDP in both de novo and salvage pathways of dTTP synthesis. This Thermoanaerobacter pseudethanolicus (strain ATCC 33223 / 39E) (Clostridium thermohydrosulfuricum) protein is Thymidylate kinase.